The primary structure comprises 190 residues: Holliday junction branch migration complex subunit RuvA (190 aa).

A domain I region spans residues 1-63; that stretch reads MLDFIKGKVI…EESIEIYGFL (63 aa). Residues 64–139 form a domain II region; that stretch reads ESSERDLFEE…ILPSLQYEKD (76 aa). Position 139 (Asp-139) is a region of interest, flexible linker. Positions 139 to 190 are domain III; sequence DQKYDDILSALLNLGYKRLEAKEVLDKIYNNEKDEATIIRESLSILAGKDGK.

The protein belongs to the RuvA family. Homotetramer. Forms an RuvA(8)-RuvB(12)-Holliday junction (HJ) complex. HJ DNA is sandwiched between 2 RuvA tetramers; dsDNA enters through RuvA and exits via RuvB. An RuvB hexamer assembles on each DNA strand where it exits the tetramer. Each RuvB hexamer is contacted by two RuvA subunits (via domain III) on 2 adjacent RuvB subunits; this complex drives branch migration. In the full resolvosome a probable DNA-RuvA(4)-RuvB(12)-RuvC(2) complex forms which resolves the HJ.

Its subcellular location is the cytoplasm. In terms of biological role, the RuvA-RuvB-RuvC complex processes Holliday junction (HJ) DNA during genetic recombination and DNA repair, while the RuvA-RuvB complex plays an important role in the rescue of blocked DNA replication forks via replication fork reversal (RFR). RuvA specifically binds to HJ cruciform DNA, conferring on it an open structure. The RuvB hexamer acts as an ATP-dependent pump, pulling dsDNA into and through the RuvAB complex. HJ branch migration allows RuvC to scan DNA until it finds its consensus sequence, where it cleaves and resolves the cruciform DNA. This chain is Holliday junction branch migration complex subunit RuvA, found in Thermodesulfovibrio yellowstonii (strain ATCC 51303 / DSM 11347 / YP87).